The primary structure comprises 475 residues: Ribulose bisphosphate carboxylase large chain (475 aa).

Positions methionine 1–serine 2 are excised as a propeptide. Proline 3 carries the post-translational modification N-acetylproline. Position 14 is an N6,N6,N6-trimethyllysine (lysine 14). Positions 123 and 173 each coordinate substrate. The active-site Proton acceptor is lysine 175. Lysine 177 serves as a coordination point for substrate. Positions 201, 203, and 204 each coordinate Mg(2+). Lysine 201 carries the post-translational modification N6-carboxylysine. The Proton acceptor role is filled by histidine 294. Arginine 295, histidine 327, and serine 379 together coordinate substrate.

Belongs to the RuBisCO large chain family. Type I subfamily. Heterohexadecamer of 8 large chains and 8 small chains; disulfide-linked. The disulfide link is formed within the large subunit homodimers. Mg(2+) serves as cofactor. Post-translationally, the disulfide bond which can form in the large chain dimeric partners within the hexadecamer appears to be associated with oxidative stress and protein turnover.

It localises to the plastid. Its subcellular location is the chloroplast. The catalysed reaction is 2 (2R)-3-phosphoglycerate + 2 H(+) = D-ribulose 1,5-bisphosphate + CO2 + H2O. It catalyses the reaction D-ribulose 1,5-bisphosphate + O2 = 2-phosphoglycolate + (2R)-3-phosphoglycerate + 2 H(+). In terms of biological role, ruBisCO catalyzes two reactions: the carboxylation of D-ribulose 1,5-bisphosphate, the primary event in carbon dioxide fixation, as well as the oxidative fragmentation of the pentose substrate in the photorespiration process. Both reactions occur simultaneously and in competition at the same active site. This chain is Ribulose bisphosphate carboxylase large chain, found in Ostrya virginiana (American hophornbeam).